Reading from the N-terminus, the 1043-residue chain is P3N-PIPO polyprotein (1043 aa).

The Peptidase S30 domain maps to 219-362 (KMNDQGVDML…RTMSHKIVHF (144 aa)). Catalysis depends on for P1 proteinase activity residues H270, D279, and S313. The Involved in interaction with stylet and aphid transmission motif lies at 414-417 (KITC). The Involved in virions binding and aphid transmission motif lies at 672 to 674 (PTK). One can recognise a Peptidase C6 domain in the interval 698-820 (MYIAKEGYCY…ESSLKHYRVG (123 aa)). Active-site for helper component proteinase activity residues include C706 and H779.

This sequence belongs to the potyviridae P3N-PIPO polyprotein family. As to quaternary structure, interacts (via PIPO domain) with host PCaP1 protein; this interaction may help to anchor the movement complex to the plasma membrane from which the complex could move to the plasmodesmata. Potyviral RNA is expressed as two polyproteins which undergo post-translational proteolytic processing. Genome polyprotein is processed by NIa-pro, P1 and HC-pro proteinases resulting in the production of at least ten individual proteins. P3N-PIPO is cleaved by P1 and HC-pro proteinases resulting in the production of three individual proteins. The P1 proteinase and the HC-pro cleave only their respective C-termini autocatalytically.

It localises to the host cell junction. Its subcellular location is the host plasmodesma. The enzyme catalyses Hydrolyzes a Gly-|-Gly bond at its own C-terminus, commonly in the sequence -Tyr-Xaa-Val-Gly-|-Gly, in the processing of the potyviral polyprotein.. In terms of biological role, cysteine protease that cleaves a Gly-Gly dipeptide at its own C-terminus. Required for aphid transmission and also has proteolytic activity. Interacts with virions and aphid stylets. Acts as a suppressor of RNA-mediated gene silencing, also known as post-transcriptional gene silencing (PTGS), a mechanism of plant viral defense that limits the accumulation of viral RNAs. May have RNA-binding activity. Functionally, allows efficient cell to cell propagation, by bypassing the host cell wall barrier. Transports viral genome to neighboring plant cells directly through plasmosdesmata, without any budding. This Alliaria petiolata (Garlic mustard) protein is P3N-PIPO polyprotein.